Reading from the N-terminus, the 71-residue chain is Translational regulator CsrA (71 aa).

It belongs to the CsrA/RsmA family. As to quaternary structure, homodimer; the beta-strands of each monomer intercalate to form a hydrophobic core, while the alpha-helices form wings that extend away from the core.

It is found in the cytoplasm. Functionally, a translational regulator that binds mRNA to regulate translation initiation and/or mRNA stability. Usually binds in the 5'-UTR at or near the Shine-Dalgarno sequence preventing ribosome-binding, thus repressing translation. Its main target seems to be the major flagellin gene, while its function is anatagonized by FliW. This is Translational regulator CsrA from Clostridium botulinum (strain Alaska E43 / Type E3).